The primary structure comprises 117 residues: Large ribosomal subunit protein uL24 (117 aa).

Over residues M1–K10 the composition is skewed to basic residues. Residues M1–L28 form a disordered region.

Belongs to the universal ribosomal protein uL24 family. In terms of assembly, part of the 50S ribosomal subunit.

Its function is as follows. One of two assembly initiator proteins, it binds directly to the 5'-end of the 23S rRNA, where it nucleates assembly of the 50S subunit. Located at the polypeptide exit tunnel on the outside of the subunit. This is Large ribosomal subunit protein uL24 from Methanobrevibacter smithii (strain ATCC 35061 / DSM 861 / OCM 144 / PS).